Consider the following 126-residue polypeptide: Protein ApaG (126 aa).

Positions 2–126 constitute an ApaG domain; sequence SFPIDSIKIK…FRLAMPGVMQ (125 aa).

The sequence is that of Protein ApaG from Shewanella denitrificans (strain OS217 / ATCC BAA-1090 / DSM 15013).